Here is a 274-residue protein sequence, read N- to C-terminus: 4-diphosphocytidyl-2-C-methyl-D-erythritol kinase (274 aa).

The active site involves Lys-8. Residue Pro-94–Ala-104 participates in ATP binding. Asp-136 is a catalytic residue.

The protein belongs to the GHMP kinase family. IspE subfamily.

The enzyme catalyses 4-CDP-2-C-methyl-D-erythritol + ATP = 4-CDP-2-C-methyl-D-erythritol 2-phosphate + ADP + H(+). It participates in isoprenoid biosynthesis; isopentenyl diphosphate biosynthesis via DXP pathway; isopentenyl diphosphate from 1-deoxy-D-xylulose 5-phosphate: step 3/6. Functionally, catalyzes the phosphorylation of the position 2 hydroxy group of 4-diphosphocytidyl-2C-methyl-D-erythritol. This Bacteroides fragilis (strain ATCC 25285 / DSM 2151 / CCUG 4856 / JCM 11019 / LMG 10263 / NCTC 9343 / Onslow / VPI 2553 / EN-2) protein is 4-diphosphocytidyl-2-C-methyl-D-erythritol kinase.